Here is a 176-residue protein sequence, read N- to C-terminus: Large ribosomal subunit protein uL5 (176 aa).

It belongs to the universal ribosomal protein uL5 family. As to quaternary structure, part of the 50S ribosomal subunit; contacts the 5S rRNA and probably tRNA. Forms a bridge to the 30S subunit in the 70S ribosome.

Functionally, this is one of the proteins that bind and probably mediate the attachment of the 5S RNA into the large ribosomal subunit, where it forms part of the central protuberance. In the 70S ribosome it contacts protein S13 of the 30S subunit (bridge B1b), connecting the 2 subunits; this bridge is implicated in subunit movement. May contact the P site tRNA; the 5S rRNA and some of its associated proteins might help stabilize positioning of ribosome-bound tRNAs. In Picrophilus torridus (strain ATCC 700027 / DSM 9790 / JCM 10055 / NBRC 100828 / KAW 2/3), this protein is Large ribosomal subunit protein uL5.